The following is a 398-amino-acid chain: Argininosuccinate synthase (398 aa).

8-16 (AYSGGLDTS) lines the ATP pocket. An L-citrulline-binding site is contributed by tyrosine 87. Residue glycine 117 coordinates ATP. The L-aspartate site is built by threonine 119, asparagine 123, and aspartate 124. Residue asparagine 123 coordinates L-citrulline. L-citrulline contacts are provided by arginine 127, serine 175, glutamate 260, and tyrosine 272.

It belongs to the argininosuccinate synthase family. Type 1 subfamily. Homotetramer.

It is found in the cytoplasm. The catalysed reaction is L-citrulline + L-aspartate + ATP = 2-(N(omega)-L-arginino)succinate + AMP + diphosphate + H(+). It functions in the pathway amino-acid biosynthesis; L-arginine biosynthesis; L-arginine from L-ornithine and carbamoyl phosphate: step 2/3. In Mycobacterium marinum (strain ATCC BAA-535 / M), this protein is Argininosuccinate synthase.